A 295-amino-acid chain; its full sequence is UDP-N-acetylenolpyruvoylglucosamine reductase (295 aa).

The 166-residue stretch at 23–188 (KVGGPADFLA…ISAKFALKPG (166 aa)) folds into the FAD-binding PCMH-type domain. The active site involves Arg167. Ser217 (proton donor) is an active-site residue. The active site involves Glu287.

This sequence belongs to the MurB family. It depends on FAD as a cofactor.

It is found in the cytoplasm. It catalyses the reaction UDP-N-acetyl-alpha-D-muramate + NADP(+) = UDP-N-acetyl-3-O-(1-carboxyvinyl)-alpha-D-glucosamine + NADPH + H(+). The protein operates within cell wall biogenesis; peptidoglycan biosynthesis. Functionally, cell wall formation. The sequence is that of UDP-N-acetylenolpyruvoylglucosamine reductase from Streptococcus pyogenes serotype M3 (strain ATCC BAA-595 / MGAS315).